The following is a 302-amino-acid chain: MEVVVKDWGVSLGYSRGALVIKKRGGVDRIPLFQVDRIWILTGGVSISSRLVRALSHHFIDVVFFDAKGNPVARLFPPEANGTVTHRRAQYEAYLTGRGFELAKLVTYGKLINQARALRRLGQWKREHYGALAEAASKIADLAGRIPSCADVQCVLGHEGAAASLYWDAVSKTTGLPGRNPEAADPLNLALNYGYGVLKYAVWRQAVIHGLDPYAGYIHADKSGRPSLVLDLMEEFRPHVDLLVIRLRPSADWADGGVLKREIRAMLVEEWTGERLEPVIARQVGLAVAHLHGQRAYTPHQL.

The Mn(2+) site is built by Glu159, His219, and Glu234.

The protein belongs to the CRISPR-associated endonuclease Cas1 family. As to quaternary structure, homodimer, forms a heterotetramer with a Cas2 homodimer. The cofactor is Mg(2+). Requires Mn(2+) as cofactor.

CRISPR (clustered regularly interspaced short palindromic repeat), is an adaptive immune system that provides protection against mobile genetic elements (viruses, transposable elements and conjugative plasmids). CRISPR clusters contain spacers, sequences complementary to antecedent mobile elements, and target invading nucleic acids. CRISPR clusters are transcribed and processed into CRISPR RNA (crRNA). Acts as a dsDNA endonuclease. Involved in the integration of spacer DNA into the CRISPR cassette. The polypeptide is CRISPR-associated endonuclease Cas1 1 (Pyrobaculum aerophilum (strain ATCC 51768 / DSM 7523 / JCM 9630 / CIP 104966 / NBRC 100827 / IM2)).